Here is a 744-residue protein sequence, read N- to C-terminus: 1,4-alpha-glucan branching enzyme GlgB (744 aa).

The disordered stretch occupies residues 1 to 23; the sequence is MSGPEDPADRRHGEVPAPRRDIP. Basic and acidic residues predominate over residues 7 to 23; the sequence is PADRRHGEVPAPRRDIP. Aspartate 424 functions as the Nucleophile in the catalytic mechanism. The active-site Proton donor is glutamate 476.

The protein belongs to the glycosyl hydrolase 13 family. GlgB subfamily. In terms of assembly, monomer.

It carries out the reaction Transfers a segment of a (1-&gt;4)-alpha-D-glucan chain to a primary hydroxy group in a similar glucan chain.. Its pathway is glycan biosynthesis; glycogen biosynthesis. Catalyzes the formation of the alpha-1,6-glucosidic linkages in glycogen by scission of a 1,4-alpha-linked oligosaccharide from growing alpha-1,4-glucan chains and the subsequent attachment of the oligosaccharide to the alpha-1,6 position. This Nocardia farcinica (strain IFM 10152) protein is 1,4-alpha-glucan branching enzyme GlgB.